The primary structure comprises 478 residues: Glycogen synthase (478 aa).

Residue Lys15 coordinates ADP-alpha-D-glucose.

It belongs to the glycosyltransferase 1 family. Bacterial/plant glycogen synthase subfamily.

The enzyme catalyses [(1-&gt;4)-alpha-D-glucosyl](n) + ADP-alpha-D-glucose = [(1-&gt;4)-alpha-D-glucosyl](n+1) + ADP + H(+). Its pathway is glycan biosynthesis; glycogen biosynthesis. Synthesizes alpha-1,4-glucan chains using ADP-glucose. This chain is Glycogen synthase, found in Streptococcus uberis (strain ATCC BAA-854 / 0140J).